We begin with the raw amino-acid sequence, 165 residues long: UPF0303 protein Bphyt_1734 (165 aa).

Belongs to the UPF0303 family.

The protein is UPF0303 protein Bphyt_1734 of Paraburkholderia phytofirmans (strain DSM 17436 / LMG 22146 / PsJN) (Burkholderia phytofirmans).